We begin with the raw amino-acid sequence, 432 residues long: Alpha-2 adrenergic receptor (432 aa).

At 1–32 (MDPLNATGMDAFTAIHLNASWSADSGYSLAAI) the chain is on the extracellular side. N-linked (GlcNAc...) asparagine glycosylation is found at N5 and N18. The helical transmembrane segment at 33-57 (ASIAALVSFLILFTVVGNILVVIAV) threads the bilayer. The Cytoplasmic portion of the chain corresponds to 58–69 (LTSRALKAPQNL). A helical transmembrane segment spans residues 70–95 (FLVSLATADILVATLVMPFSLANELM). Residues 96-105 (GYWYFGKVWC) are Extracellular-facing. C105 and C183 are oxidised to a cystine. The chain crosses the membrane as a helical span at residues 106-128 (GIYLALDVLFCTSSIVHLCAISL). Residues 129 to 149 (DRYWSVTQAVEYNLKRTPKRV) lie on the Cytoplasmic side of the membrane. Residues 150 to 172 (KCIIVIVWLISAFISSPPLLSID) form a helical membrane-spanning segment. Residues 173 to 188 (SNNYISSQPQCMLNDD) are Extracellular-facing. Residues 189 to 212 (TWYILSSSMASFFAPCLIMILVYI) traverse the membrane as a helical segment. The Cytoplasmic segment spans residues 213-356 (RIYQVAKTRT…QAREKRFTFV (144 aa)). The disordered stretch occupies residues 222-319 (TRSMSGKEPR…SISKQSARIS (98 aa)). Polar residues-rich tracts occupy residues 235–246 (VTQTENGLNKAN) and 265–275 (SQRTVTIGQQT). The segment covering 288-300 (GKGHKPQRQDSQR) has biased composition (basic and acidic residues). Positions 309-319 (SSISKQSARIS) are enriched in polar residues. The helical transmembrane segment at 357 to 380 (LAVVMGVFVVCWFPFFFSYSLHAV) threads the bilayer. Residues 381–393 (CRDYCKIPDTLFK) lie on the Extracellular side of the membrane. The chain crosses the membrane as a helical span at residues 394 to 413 (FFWIGYCNSSLNPAIYTIFN). The Cytoplasmic segment spans residues 414 to 432 (RDFRRAFQKILCKSWKKSF).

It belongs to the G-protein coupled receptor 1 family.

The protein resides in the cell membrane. Its function is as follows. Alpha-2 adrenergic receptors mediate the catecholamine-induced inhibition of adenylate cyclase through the action of G proteins. In Labrus ossifagus (Cuckoo wrasse), this protein is Alpha-2 adrenergic receptor.